The sequence spans 423 residues: Glucose-1-phosphate adenylyltransferase (423 aa).

Alpha-D-glucose 1-phosphate-binding positions include Tyr-100, Gly-165, Glu-180–Lys-181, and Ser-191.

Belongs to the bacterial/plant glucose-1-phosphate adenylyltransferase family. Homotetramer.

The catalysed reaction is alpha-D-glucose 1-phosphate + ATP + H(+) = ADP-alpha-D-glucose + diphosphate. Its pathway is glycan biosynthesis; glycogen biosynthesis. Functionally, involved in the biosynthesis of ADP-glucose, a building block required for the elongation reactions to produce glycogen. Catalyzes the reaction between ATP and alpha-D-glucose 1-phosphate (G1P) to produce pyrophosphate and ADP-Glc. In Lachnospira eligens (strain ATCC 27750 / DSM 3376 / VPI C15-48 / C15-B4) (Eubacterium eligens), this protein is Glucose-1-phosphate adenylyltransferase.